A 1493-amino-acid chain; its full sequence is Protein Shroom4 (1493 aa).

Residues 10 to 92 (YVPVQLQGGA…ILKLIVRRRN (83 aa)) enclose the PDZ domain. The interval 202–282 (CALSLRPEEP…PPQPPVRRDS (81 aa)) is disordered. 2 stretches are compositionally biased toward polar residues: residues 234 to 243 (AETSGGSRRT) and 249 to 262 (TPSS…QEGY). The residue at position 411 (S411) is a Phosphoserine. A disordered region spans residues 430–695 (GSKGMELPPV…SPGQRPGQSS (266 aa)). Composition is skewed to basic and acidic residues over residues 470 to 484 (QSSK…DDRS) and 498 to 509 (GEADGHPSEKGF). The span at 513-547 (NRTSRAASELANQQPSASGSLVQQATDCSSTTKAA) shows a compositional bias: polar residues. Position 729 is a phosphoserine (S729). Disordered regions lie at residues 740–759 (AAME…ASTA) and 781–813 (SKSL…NFQP). Over residues 782–802 (KSLSTSHLPGLTTHSNKTFTQ) the composition is skewed to polar residues. The residue at position 1019 (S1019) is a Phosphoserine. Disordered regions lie at residues 1117–1170 (AAQQ…ETSG), 1187–1206 (SFGH…AEQE), 1214–1236 (DFLP…PCYY), and 1246–1265 (GQEA…PPSG). The segment covering 1118-1129 (AQQQKQQQQQQK) has biased composition (low complexity). Over residues 1132–1159 (EEEEEEEEEEEEEEEEEEEEAEEEEEEL) the composition is skewed to acidic residues. Positions 1213–1492 (SDFLPPIRGH…RESLLLGPSN (280 aa)) constitute an ASD2 domain. Residues 1382-1488 (LSGRLARVEN…LKCLRESLLL (107 aa)) adopt a coiled-coil conformation.

The protein belongs to the shroom family. As to quaternary structure, interacts directly with F-actin. In terms of tissue distribution, expressed in all fetal and adult tissues investigated. Expressed in adult heart, brain, placenta, lung, liver, skeletal muscle, kidney and pancreas. In brain regions detected in cerebellum, cerebral cortex, medulla, spinal cord, occipital pole, frontal lobe, temporal lobe and putamen. The expression is strongest in the medulla and weakest in the cerebral cortex.

The protein localises to the cytoplasm. It localises to the cytoskeleton. In terms of biological role, probable regulator of cytoskeletal architecture that plays an important role in development. May regulate cellular and cytoskeletal architecture by modulating the spatial distribution of myosin II. The protein is Protein Shroom4 (SHROOM4) of Homo sapiens (Human).